The chain runs to 206 residues: Ion-translocating oxidoreductase complex subunit G (206 aa).

The helical transmembrane segment at Gly-9–Met-29 threads the bilayer. Thr-174 carries the post-translational modification FMN phosphoryl threonine.

The protein belongs to the RnfG family. The complex is composed of six subunits: RsxA, RsxB, RsxC, RsxD, RsxE and RsxG. The cofactor is FMN.

It is found in the cell inner membrane. In terms of biological role, part of a membrane-bound complex that couples electron transfer with translocation of ions across the membrane. Required to maintain the reduced state of SoxR. The polypeptide is Ion-translocating oxidoreductase complex subunit G (Salmonella typhimurium (strain LT2 / SGSC1412 / ATCC 700720)).